The sequence spans 338 residues: Fructose-1,6-bisphosphatase class 1 1 (338 aa).

The Mg(2+) site is built by glutamate 91, aspartate 113, leucine 115, and aspartate 116. Residues 116–119 (DGSS), asparagine 208, and lysine 274 contribute to the substrate site. A Mg(2+)-binding site is contributed by glutamate 280.

This sequence belongs to the FBPase class 1 family. Homotetramer. Mg(2+) is required as a cofactor.

The protein localises to the cytoplasm. The catalysed reaction is beta-D-fructose 1,6-bisphosphate + H2O = beta-D-fructose 6-phosphate + phosphate. It functions in the pathway carbohydrate biosynthesis; gluconeogenesis. The chain is Fructose-1,6-bisphosphatase class 1 1 from Cupriavidus metallidurans (strain ATCC 43123 / DSM 2839 / NBRC 102507 / CH34) (Ralstonia metallidurans).